The sequence spans 896 residues: Phycobiliprotein ApcE (896 aa).

Residue Cys190 participates in (2R,3E)-phycocyanobilin binding. 3 PBS-linker domains span residues 247-427, 508-684, and 703-881; these read DIQG…FRKV, LGAK…QRVD, and EPEI…KQDK.

It belongs to the phycobilisome linker protein family. As to quaternary structure, heterodimer of ApcF (a variant beta-allophycocyanin). Phycobilisomes of this organism are composed of a two cylinder core, from which six rods radiate. The core is mainly composed of allophycocyanin alpha and beta chains and of minor components. Contains one covalently linked bilin chromophore. This protein autochromophorylates.

It localises to the cellular thylakoid membrane. This protein is postulated to act both as terminal energy acceptor (by its phycobilin-like domains) and as a linker polypeptide (by its repeats and arms) that stabilizes the phycobilisome core architecture. Has intrinsic bilin lyase activity. This is Phycobiliprotein ApcE (apcE) from Synechocystis sp. (strain ATCC 27184 / PCC 6803 / Kazusa).